The sequence spans 254 residues: Hemin import ATP-binding protein HmuV (254 aa).

The 238-residue stretch at 2–239 (LNINQVNINL…DTLSQVWHYD (238 aa)) folds into the ABC transporter domain. ATP is bound at residue 34-41 (GPNGAGKS).

Belongs to the ABC transporter superfamily. Heme (hemin) importer (TC 3.A.1.14.5) family. The complex is composed of two ATP-binding proteins (HmuV), two transmembrane proteins (HmuU) and a solute-binding protein (HmuT).

Its subcellular location is the cell inner membrane. In terms of biological role, part of the ABC transporter complex HmuTUV involved in hemin import. Responsible for energy coupling to the transport system. This Shewanella denitrificans (strain OS217 / ATCC BAA-1090 / DSM 15013) protein is Hemin import ATP-binding protein HmuV.